Reading from the N-terminus, the 137-residue chain is Large-conductance mechanosensitive channel (137 aa).

2 consecutive transmembrane segments (helical) span residues 9–29 (AFAV…GAAF) and 79–99 (IQTV…VKAI).

It belongs to the MscL family. Homopentamer.

It localises to the cell inner membrane. In terms of biological role, channel that opens in response to stretch forces in the membrane lipid bilayer. May participate in the regulation of osmotic pressure changes within the cell. This chain is Large-conductance mechanosensitive channel, found in Pseudomonas aeruginosa (strain ATCC 15692 / DSM 22644 / CIP 104116 / JCM 14847 / LMG 12228 / 1C / PRS 101 / PAO1).